A 536-amino-acid chain; its full sequence is Suppressor of cytokine signaling 5 (536 aa).

Positions 1 to 50 (MDKVGKMWNNFKYRCQNLFGHEGGSRSENVDMNSNRCLSVKEKNISIGDS) are required for interaction with IL4R. A disordered region spans residues 115 to 175 (SRHAPWGGKK…SVSSRTVGSR (61 aa)). Residues 158–169 (VSSVHDMDSVSS) show a composition bias toward low complexity. The SH2 domain maps to 381-476 (CYWGVMDRYE…FFEPLLTISL (96 aa)). Residues 471–520 (LLTISLNRTFPFSLQYICRAVICRCTTYDGIDGLPLPSMLQDFLKEYHYK) form the SOCS box domain.

As to quaternary structure, interacts with IL4R; inhibits IL4 signaling. Interacts with EGFR. Interacts with ELOB and ELOC; mediates EGFR ubiquitination and degradation. Phosphorylated. Phosphorylation is induced by EGF.

It functions in the pathway protein modification; protein ubiquitination. SOCS family proteins form part of a classical negative feedback system that regulates cytokine signal transduction. May be a substrate-recognition component of a SCF-like ECS (Elongin BC-CUL2/5-SOCS-box protein) E3 ubiquitin-protein ligase complex which mediates the ubiquitination and subsequent proteasomal degradation of target proteins. Inhibits for instance EGF signaling by mediating the degradation of the EGF receptor/EGFR. Involved in the regulation of T-helper cell differentiation by inhibiting of the IL4 signaling pathway which promotes differentiation into the Th2 phenotype. Can also partially inhibit IL6 and LIF signaling. This is Suppressor of cytokine signaling 5 (SOCS5) from Homo sapiens (Human).